Reading from the N-terminus, the 915-residue chain is Coronin-7 (915 aa).

WD repeat units follow at residues 75–115, 124–163, 166–205, and 209–253; these read CHSD…QALP, PEDA…PLTE, THGD…EAAQ, and AHEN…AALT. The disordered stretch occupies residues 396-456; it reads TSCLAPPAEL…TSPSQRSLQS (61 aa). 2 stretches are compositionally biased toward low complexity: residues 399–413 and 420–450; these read LAPP…AQPA and SSTP…TSPS. A phosphoserine mark is found at serine 453 and serine 456. Lysine 463 is covalently cross-linked (Glycyl lysine isopeptide (Lys-Gly) (interchain with G-Cter in ubiquitin)). WD repeat units lie at residues 533–573, 583–623, 626–665, and 719–759; these read QNGV…LQEV, GHTE…EQLR, GHRD…EPLQ, and DVAP…PFFL. The disordered stretch occupies residues 850–915; that stretch reads PPGMTPVSQA…FEGVDEDEWD (66 aa). Over residues 859–869 the composition is skewed to low complexity; sequence APREAPARRAP. The segment covering 874-886 has biased composition (basic and acidic residues); sequence LEEKSDQQKKEEL. A Phosphoserine modification is found at serine 905.

This sequence belongs to the WD repeat coronin family. Interacts with clathrin adapter AP1 complex. This interaction takes place at Golgi membranes and not AP1-positive endosomal membranes. Interacts (when ubiquitinated at Lys-463) with EPS15. Post-translationally, the membrane-associated form is phosphorylated on tyrosine residues. Ubiquitinated via 'Lys-33'-linked ubiquitin chains by the BCR(KLHL20) E3 ubiquitin ligase complex: 'Lys-33'-linked ubiquitination promotes interaction with EPS15 and facilitates actin polymerization at the trans-Golgi network, thereby facilitating post-Golgi trafficking. Deubiquitinated by ZRANB1/TRABID.

It localises to the golgi apparatus membrane. Its subcellular location is the golgi apparatus. It is found in the trans-Golgi network. The protein localises to the cytoplasmic vesicle. The protein resides in the cytoplasm. It localises to the cytosol. In terms of biological role, F-actin regulator involved in anterograde Golgi to endosome transport: upon ubiquitination via 'Lys-33'-linked ubiquitin chains by the BCR(KLHL20) E3 ubiquitin ligase complex, interacts with EPS15 and localizes to the trans-Golgi network, where it promotes actin polymerization, thereby facilitating post-Golgi trafficking. May play a role in the maintenance of the Golgi apparatus morphology. This is Coronin-7 (CORO7) from Bos taurus (Bovine).